A 389-amino-acid polypeptide reads, in one-letter code: MTSRKPLARYRRIVIKIGSALLVDRKAGLKKAWLDAMCADIAGLKAKGIDVLVVSSGAIALGRSVLDLPSGALKLEESQAAAAVGQIALARAWSESLSRDEIVAGQILLTLGDTEERRRYLNARATINQLLKIGAVPIINENDTVATSEIRYGDNDRLAARVATMTGADLLILLSDIDGLYTAPPHLDPNATFLETIAEITPDIEAMAGGAASELSRGGMRTKIDAGKIATTSGCAMIIASGKPDSPLSSIENGARSSWFAPSGTPVTARKIWIAGQLQPAGELHVDDGAVTALGAGKSLLPAGVRSVSGLFSRGDTVAIVGPEGREIARGLVSYDAEDARRIAGRKSAEIEAILGYAGRAAMVHRDDMVMSAQLRQKSERQKKDAAHA.

Lysine 16 is an ATP binding site. Residues serine 56, aspartate 143, and asparagine 155 each contribute to the substrate site. 175–176 lines the ATP pocket; the sequence is SD. Positions 281-358 constitute a PUA domain; that stretch reads AGELHVDDGA…AEIEAILGYA (78 aa).

Belongs to the glutamate 5-kinase family.

The protein resides in the cytoplasm. It catalyses the reaction L-glutamate + ATP = L-glutamyl 5-phosphate + ADP. The protein operates within amino-acid biosynthesis; L-proline biosynthesis; L-glutamate 5-semialdehyde from L-glutamate: step 1/2. In terms of biological role, catalyzes the transfer of a phosphate group to glutamate to form L-glutamate 5-phosphate. This is Glutamate 5-kinase from Rhizobium etli (strain CIAT 652).